Here is a 502-residue protein sequence, read N- to C-terminus: Membrane-bound lytic murein transglycosylase F (502 aa).

Residues 1–33 form the signal peptide; the sequence is MSRFISTFRSSSAQLSIVLAVILATGCSQPTTL. The segment at 34-264 is non-LT domain; the sequence is QEIREEGVLH…QLAERFYGHL (231 aa). The segment at 265-502 is LT domain; the sequence is DRLNYVGART…PELRLIPPTL (238 aa). Glu-311 is a catalytic residue. Residues 457-502 form a disordered region; that stretch reads PSASGLEDQLAWLGDNEAGPEAPAKESQPDLRADLPPELRLIPPTL. A compositionally biased stretch (basic and acidic residues) spans 479–493; it reads PAKESQPDLRADLPP.

It in the N-terminal section; belongs to the bacterial solute-binding protein 3 family. The protein in the C-terminal section; belongs to the transglycosylase Slt family.

Its subcellular location is the cell outer membrane. It catalyses the reaction Exolytic cleavage of the (1-&gt;4)-beta-glycosidic linkage between N-acetylmuramic acid (MurNAc) and N-acetylglucosamine (GlcNAc) residues in peptidoglycan, from either the reducing or the non-reducing ends of the peptidoglycan chains, with concomitant formation of a 1,6-anhydrobond in the MurNAc residue.. Its function is as follows. Murein-degrading enzyme that degrades murein glycan strands and insoluble, high-molecular weight murein sacculi, with the concomitant formation of a 1,6-anhydromuramoyl product. Lytic transglycosylases (LTs) play an integral role in the metabolism of the peptidoglycan (PG) sacculus. Their lytic action creates space within the PG sacculus to allow for its expansion as well as for the insertion of various structures such as secretion systems and flagella. This Marinobacter nauticus (strain ATCC 700491 / DSM 11845 / VT8) (Marinobacter aquaeolei) protein is Membrane-bound lytic murein transglycosylase F.